Here is a 352-residue protein sequence, read N- to C-terminus: Uroporphyrinogen decarboxylase (352 aa).

Substrate-binding positions include 27–31 (RQAGR), aspartate 77, tyrosine 154, threonine 209, and histidine 325.

This sequence belongs to the uroporphyrinogen decarboxylase family. As to quaternary structure, homodimer.

It is found in the cytoplasm. The catalysed reaction is uroporphyrinogen III + 4 H(+) = coproporphyrinogen III + 4 CO2. It participates in porphyrin-containing compound metabolism; protoporphyrin-IX biosynthesis; coproporphyrinogen-III from 5-aminolevulinate: step 4/4. In terms of biological role, catalyzes the decarboxylation of four acetate groups of uroporphyrinogen-III to yield coproporphyrinogen-III. The polypeptide is Uroporphyrinogen decarboxylase (Legionella pneumophila subsp. pneumophila (strain Philadelphia 1 / ATCC 33152 / DSM 7513)).